The chain runs to 325 residues: Putative gluconeogenesis factor (325 aa).

Belongs to the gluconeogenesis factor family.

The protein localises to the cytoplasm. Functionally, required for morphogenesis under gluconeogenic growth conditions. This Streptococcus pyogenes serotype M1 protein is Putative gluconeogenesis factor.